A 99-amino-acid chain; its full sequence is Plastocyanin (99 aa).

In terms of domain architecture, Plastocyanin-like spans Ala-1–Asn-99. His-37, Cys-84, His-87, and Met-92 together coordinate Cu cation.

It belongs to the plastocyanin family. The cofactor is Cu(2+).

It localises to the plastid. Its subcellular location is the chloroplast thylakoid membrane. Functionally, participates in electron transfer between P700 and the cytochrome b6-f complex in photosystem I. In Lactuca sativa (Garden lettuce), this protein is Plastocyanin (PETE).